Here is a 133-residue protein sequence, read N- to C-terminus: Nodulation protein K (133 aa).

This chain is Nodulation protein K (nodK), found in Bradyrhizobium elkanii.